Reading from the N-terminus, the 514-residue chain is Cytochrome P450 monooxygenase nodJ (514 aa).

The helical transmembrane segment at 2–24 threads the bilayer; that stretch reads ELIVIIITLAFCILLYGTRWRAA. Residues asparagine 144, asparagine 245, and asparagine 416 are each glycosylated (N-linked (GlcNAc...) asparagine). Cysteine 432 provides a ligand contact to heme.

This sequence belongs to the cytochrome P450 family. Heme serves as cofactor.

It is found in the membrane. The protein operates within secondary metabolite biosynthesis. Functionally, cytochrome P450 monooxygenase; part of the gene cluster that mediates the biosynthesis of the indole diterpenes nodulisporic acids (NA). Nodulisporic acid A (NAA) and its chemically modified derivatives are of particular significance because of their highly potent insecticidal activity against blood-feeding arthropods and lack of observable adverse effects on mammals, in particular the tremogenicity associated with the paspaline-derived IDTs is not observed. The geranylgeranyl diphosphate (GGPP) synthase ggs1, localized outside of the cluster, is proposed to catalyze the first step in nodulisporic acid biosynthesis via conversion of farnesyl pyrophosphate and isopentyl pyrophosphate into geranylgeranyl pyrophosphate (GGPP). Condensation of indole-3-glycerol phosphate with GGPP by the prenyl transferase nodC then forms 3-geranylgeranylindole (3-GGI). Epoxidation by the FAD-dependent monooxygenase nodM leads to a single-epoxidized-GGI that is substrate of the terpene cyclase nodB for cyclization to yield emindole SB. The terminal methyl carbon, C28, of emindole SB is then oxidized by the cytochrome P450 monooxygenase nodW to produce nodulisporic acid F (NAF), the pentacyclic core of NAA. NAF is converted to nodulisporic acid E (NAE) via prenylation. This step is probably performed by one of the indole diterpene prenyltransferases nodD1 or nodD2. Several oxidation steps performed by the FAD-linked oxidoreductase nodO and one of the cytochrome P450 monooxygenase nodR, nodX or nodZ further convert NAE to nodulisporic acid D (NAD). NAD is substrate of cytochrome P450 monooxygenase nodJ to produce the precursor of nodulisporic acid C (NAC), converted to NAC by one of the indole diterpene prenyltransferases nodD1 or nodD2. The FAD-dependent monooxygenase nodY2 then oxidizes NAC to nodulisporic acid B (NAB). Finally NAB is converted to NAA by one of the cytochrome P450 monooxygenases nodR, nodX or nodZ. The protein is Cytochrome P450 monooxygenase nodJ of Hypoxylon pulicicidum.